We begin with the raw amino-acid sequence, 159 residues long: Ribosomal RNA large subunit methyltransferase H (159 aa).

S-adenosyl-L-methionine contacts are provided by residues L76, G108, and 127-132 (FSKMTF).

The protein belongs to the RNA methyltransferase RlmH family. Homodimer.

Its subcellular location is the cytoplasm. The enzyme catalyses pseudouridine(1915) in 23S rRNA + S-adenosyl-L-methionine = N(3)-methylpseudouridine(1915) in 23S rRNA + S-adenosyl-L-homocysteine + H(+). Specifically methylates the pseudouridine at position 1915 (m3Psi1915) in 23S rRNA. This is Ribosomal RNA large subunit methyltransferase H from Lachnospira eligens (strain ATCC 27750 / DSM 3376 / VPI C15-48 / C15-B4) (Eubacterium eligens).